We begin with the raw amino-acid sequence, 391 residues long: Phosphoglycerate kinase (391 aa).

Substrate contacts are provided by residues 21–23 (DLN), Arg-36, 59–62 (HLGR), Arg-113, and Arg-146. ATP is bound by residues Lys-197, Glu-319, and 345 to 348 (GGDT).

It belongs to the phosphoglycerate kinase family. In terms of assembly, monomer.

The protein resides in the cytoplasm. The enzyme catalyses (2R)-3-phosphoglycerate + ATP = (2R)-3-phospho-glyceroyl phosphate + ADP. It functions in the pathway carbohydrate degradation; glycolysis; pyruvate from D-glyceraldehyde 3-phosphate: step 2/5. The chain is Phosphoglycerate kinase from Xanthomonas oryzae pv. oryzae (strain PXO99A).